Reading from the N-terminus, the 185-residue chain is Ribosome-recycling factor (185 aa).

It belongs to the RRF family.

It localises to the cytoplasm. In terms of biological role, responsible for the release of ribosomes from messenger RNA at the termination of protein biosynthesis. May increase the efficiency of translation by recycling ribosomes from one round of translation to another. This is Ribosome-recycling factor from Shewanella baltica (strain OS223).